Reading from the N-terminus, the 557-residue chain is Inositol-3-phosphate synthase 1 (557 aa).

Positions 67, 68, 69, 70, 141, 177, 178, 188, 191, 228, 229, 230, 231, 278, 279, 303, 306, 337, 338, 339, and 352 each coordinate NAD(+). A Phosphoserine modification is found at S279. S357 carries the post-translational modification Phosphoserine. The NAD(+) site is built by G390, D391, D419, and S420. The interval 514 to 557 is disordered; sequence GIKPEEVKATSPLPCKKESTPATNGCTGDANGHTQAPTPELSTA. Residue S524 is modified to Phosphoserine. Positions 533–557 are enriched in polar residues; it reads TPATNGCTGDANGHTQAPTPELSTA.

It belongs to the myo-inositol 1-phosphate synthase family. Homotrimer. It depends on NAD(+) as a cofactor. In terms of processing, phosphorylation at Ser-524 does not appear to affect enzyme activity, and is detected in brain and testis. As to expression, expressed in testis, brain and epididymis (at protein level). Moderately expressed in brain, lung, liver, and kidney. Low expression in heart and spleen. Very low expression in skeletal muscle. Expressed in testis, spleen, heart, brainstem, hippocampus, cerebellum, cortex and amygdala. Absent or very lowly expressed in intestine, lung and muscle. In terms of tissue distribution, expressed in intestine, lung, liver, muscle, testis, spleen, brainstem, hippocampus, cerebellum, cortex and amygdala. Absent or lowly expressed in heart and kidney. As to expression, expressed in intestine (at protein level).

The protein resides in the cytoplasm. The enzyme catalyses D-glucose 6-phosphate = 1D-myo-inositol 3-phosphate. Its pathway is polyol metabolism; myo-inositol biosynthesis; myo-inositol from D-glucose 6-phosphate: step 1/2. With respect to regulation, inhibited by 2-deoxyglucitol 6-phosphate (dgtolP) and 2-deoxy-D-glucose 6-phosphate. Inhibited by copper, mercury, cadmium, zinc and copper ions. Activated by potassium and ammonium ions. Key enzyme in myo-inositol biosynthesis pathway that catalyzes the conversion of glucose 6-phosphate to 1-myo-inositol 1-phosphate in a NAD-dependent manner. Rate-limiting enzyme in the synthesis of all inositol-containing compounds. In terms of biological role, key enzyme in myo-inositol biosynthesis pathway that catalyzes the conversion of glucose 6-phosphate to 1-myo-inositol 1-phosphate in a NAD-dependent manner. Its function is as follows. Competitively inhibits the function of isoform 1, presumably by competing for NAD cofactor. The sequence is that of Inositol-3-phosphate synthase 1 (Isyna1) from Rattus norvegicus (Rat).